Consider the following 141-residue polypeptide: Cystatin (141 aa).

The first 26 residues, 1–26, serve as a signal peptide directing secretion; that stretch reads MVHFQLPVAAPLCLLCALLLLPSATM. One can recognise a Cystatin domain in the interval 29–129; the sequence is GGLSPRSVSD…CHFQVWSRPW (101 aa). A Secondary area of contact motif is present at residues 73-77; it reads QVVAG. Disulfide bonds link cysteine 91–cysteine 107 and cysteine 120–cysteine 140.

It belongs to the cystatin family. Expressed at a low level by the venom gland (at protein level).

The protein localises to the secreted. Functionally, inhibits various C1 cysteine proteases including cathepsin L, papain and cathepsin B. This protein has no toxic activity and its function in the venom is unknown. It may play a role as a housekeeping or regulatory protein. This is Cystatin from Naja kaouthia (Monocled cobra).